A 154-amino-acid polypeptide reads, in one-letter code: Myoglobin (154 aa).

Residues 2-148 form the Globin domain; sequence GLSDGEWHLV…FRNDIAAKYK (147 aa). Position 4 is a phosphoserine (Ser-4). His-65 is a nitrite binding site. His-65 is a binding site for O2. Phosphothreonine is present on Thr-68. A heme b-binding site is contributed by His-94.

It belongs to the globin family. As to quaternary structure, monomeric.

It localises to the cytoplasm. The protein resides in the sarcoplasm. The enzyme catalyses Fe(III)-heme b-[protein] + nitric oxide + H2O = Fe(II)-heme b-[protein] + nitrite + 2 H(+). It carries out the reaction H2O2 + AH2 = A + 2 H2O. Its function is as follows. Monomeric heme protein which primary function is to store oxygen and facilitate its diffusion within muscle tissues. Reversibly binds oxygen through a pentacoordinated heme iron and enables its timely and efficient release as needed during periods of heightened demand. Depending on the oxidative conditions of tissues and cells, and in addition to its ability to bind oxygen, it also has a nitrite reductase activity whereby it regulates the production of bioactive nitric oxide. Under stress conditions, like hypoxia and anoxia, it also protects cells against reactive oxygen species thanks to its pseudoperoxidase activity. The chain is Myoglobin (MB) from Halichoerus grypus (Gray seal).